The chain runs to 82 residues: Turripeptide Gsp9.1 (82 aa).

Positions 1 to 23 are cleaved as a signal peptide; sequence MMAKLMITVMMVLLLSLQQGADG. Residues 24 to 46 constitute a propeptide that is removed on maturation; sequence RSKRWRKNQMAASSIMRNLITAR. 2 positions are modified to 4-hydroxyproline: proline 49 and proline 50. Disulfide bonds link cysteine 53-cysteine 68, cysteine 58-cysteine 72, and cysteine 64-cysteine 79. Residues glutamate 60 and glutamate 63 each carry the 4-carboxyglutamate modification.

Belongs to the Pg turripeptide superfamily. As to expression, expressed by the venom duct.

It localises to the secreted. In Gemmula speciosa (Splendid gem-turris), this protein is Turripeptide Gsp9.1.